We begin with the raw amino-acid sequence, 87 residues long: Large ribosomal subunit protein eL33 (87 aa).

This sequence belongs to the eukaryotic ribosomal protein eL33 family.

In Pyrococcus horikoshii (strain ATCC 700860 / DSM 12428 / JCM 9974 / NBRC 100139 / OT-3), this protein is Large ribosomal subunit protein eL33.